We begin with the raw amino-acid sequence, 163 residues long: Small ribosomal subunit protein bS6 (163 aa).

Residues 97–163 (EEGQTAMLTN…GRNEGEGDRA (67 aa)) form a disordered region. Basic and acidic residues predominate over residues 122 to 163 (RGPRRDFGDRGPRRDFGDRGPRRDGDGPRAEGGRNEGEGDRA).

The protein belongs to the bacterial ribosomal protein bS6 family.

Functionally, binds together with bS18 to 16S ribosomal RNA. This chain is Small ribosomal subunit protein bS6, found in Rhodospirillum centenum (strain ATCC 51521 / SW).